A 436-amino-acid polypeptide reads, in one-letter code: Acetyl-CoA decarbonylase/synthase complex subunit delta 1 (436 aa).

The protein belongs to the CdhD family. As to quaternary structure, heterodimer of delta and gamma chains. The ACDS complex is made up of alpha, epsilon, beta, gamma and delta chains with a probable stoichiometry of (alpha(2)epsilon(2))(4)-beta(8)-(gamma(1)delta(1))(8) (Potential).

It participates in one-carbon metabolism; methanogenesis from acetate. Its function is as follows. Part of a complex that catalyzes the reversible cleavage of acetyl-CoA, allowing growth on acetate as sole source of carbon and energy. Probably maintains the overall quaternary structure of the ACDS complex. This is Acetyl-CoA decarbonylase/synthase complex subunit delta 1 (cdhD1) from Methanosarcina thermophila.